The sequence spans 308 residues: Glucan 1,3-beta-glucosidase BGL2 (308 aa).

Positions 1 to 18 (MQIKFLTTLATVLTSVAA) are cleaved as a signal peptide. Glutamate 119 acts as the Proton donor in catalysis. N-linked (GlcNAc...) asparagine glycosylation is present at asparagine 197. Glutamate 228 serves as the catalytic Nucleophile.

It belongs to the glycosyl hydrolase 17 family.

The protein resides in the secreted. It localises to the cell wall. Its subcellular location is the cytoplasm. The catalysed reaction is Successive hydrolysis of beta-D-glucose units from the non-reducing ends of (1-&gt;3)-beta-D-glucans, releasing alpha-glucose.. Cell wall glucan 1,3-beta-glucosidase involved in cell wall biosynthesis and virulence. Crucial for delivery of beta-1,3-glucan to the biofilm matrix and for accumulation of mature matrix biomass. Plays a role as a major antigen in human systemic candidiasis patients. The polypeptide is Glucan 1,3-beta-glucosidase BGL2 (BGL2) (Candida albicans (strain SC5314 / ATCC MYA-2876) (Yeast)).